Consider the following 847-residue polypeptide: Receptor-like protein 12 (847 aa).

The first 27 residues, methionine 1–alanine 27, serve as a signal peptide directing secretion. Topologically, residues serine 28–asparagine 798 are extracellular. N-linked (GlcNAc...) asparagine glycans are attached at residues asparagine 52, asparagine 66, asparagine 103, and asparagine 132. LRR repeat units lie at residues leucine 109–leucine 133, histidine 135–leucine 157, asparagine 158–leucine 181, arginine 183–leucine 205, lysine 206–leucine 229, asparagine 231–leucine 253, isoleucine 254–leucine 277, lysine 279–phenylalanine 301, histidine 302–isoleucine 325, proline 326–serine 350, threonine 351–leucine 374, leucine 375–leucine 398, asparagine 400–leucine 422, threonine 424–glutamate 442, alanine 443–leucine 466, serine 467–serine 491, glycine 492–lysine 514, threonine 516–cysteine 539, alanine 541–serine 562, leucine 563–isoleucine 587, phenylalanine 589–asparagine 613, arginine 657–leucine 681, lysine 682–asparagine 704, leucine 705–leucine 729, and phenylalanine 731–arginine 754. Asparagine 180 carries N-linked (GlcNAc...) asparagine glycosylation. 2 N-linked (GlcNAc...) asparagine glycosylation sites follow: asparagine 210 and asparagine 228. N-linked (GlcNAc...) asparagine glycans are attached at residues asparagine 263, asparagine 276, and asparagine 289. N-linked (GlcNAc...) asparagine glycosylation is present at asparagine 346. The N-linked (GlcNAc...) asparagine glycan is linked to asparagine 386. Asparagine 437 is a glycosylation site (N-linked (GlcNAc...) asparagine). 2 N-linked (GlcNAc...) asparagine glycosylation sites follow: asparagine 489 and asparagine 503. The N-linked (GlcNAc...) asparagine glycan is linked to asparagine 601. Asparagine 688 and asparagine 704 each carry an N-linked (GlcNAc...) asparagine glycan. N-linked (GlcNAc...) asparagine glycosylation occurs at asparagine 736. A helical transmembrane segment spans residues tryptophan 799 to phenylalanine 819. Over tyrosine 820–leucine 847 the chain is Cytoplasmic.

Belongs to the RLP family.

It localises to the cell membrane. Its function is as follows. Involved in the perception of CLV3 and CLV3-like peptides, that act as extracellular signals regulating meristems maintenance. The sequence is that of Receptor-like protein 12 from Arabidopsis thaliana (Mouse-ear cress).